The primary structure comprises 1129 residues: DNA-directed RNA polymerase I subunit RPA2 (1129 aa).

The C4-type zinc-finger motif lies at 1061-1093 (CHKCGSILAPLQRIVKRNETGGLSSQPDTCRLC).

It belongs to the RNA polymerase beta chain family. In terms of assembly, component of the RNA polymerase I (Pol I) complex consisting of at least 13 subunits.

It is found in the nucleus. The protein resides in the nucleolus. It catalyses the reaction RNA(n) + a ribonucleoside 5'-triphosphate = RNA(n+1) + diphosphate. DNA-dependent RNA polymerase catalyzes the transcription of DNA into RNA using the four ribonucleoside triphosphates as substrates. Second largest core component of RNA polymerase I which synthesizes ribosomal RNA precursors. Proposed to contribute to the polymerase catalytic activity and forms the polymerase active center together with the largest subunit. Pol I is composed of mobile elements and RPA2 is part of the core element with the central large cleft and probably a clamp element that moves to open and close the cleft. The protein is DNA-directed RNA polymerase I subunit RPA2 of Drosophila melanogaster (Fruit fly).